Consider the following 159-residue polypeptide: Protein-export protein SecB (159 aa).

It belongs to the SecB family. Homotetramer, a dimer of dimers. One homotetramer interacts with 1 SecA dimer.

Its subcellular location is the cytoplasm. Functionally, one of the proteins required for the normal export of preproteins out of the cell cytoplasm. It is a molecular chaperone that binds to a subset of precursor proteins, maintaining them in a translocation-competent state. It also specifically binds to its receptor SecA. The polypeptide is Protein-export protein SecB (Burkholderia mallei (strain NCTC 10229)).